Here is a 211-residue protein sequence, read N- to C-terminus: Putative ankyrin repeat protein R810 (211 aa).

ANK repeat units lie at residues 31-61, 72-101, 103-131, 133-162, and 163-191; these read TKFIKLYYLVKTHKSILKKIVKNGYFENLKY, NINDVLLLACKYGNLPIVKYLVSKGADICA, QNSPIKNATYYGHLDVVKYLVSNGAKFFG, YSSAIIIASSSGKLDIVKYFVPGKIYFCLE, and MEIALVCATENKHTNIVDYLNSMRSSYFD.

In Acanthamoeba polyphaga mimivirus (APMV), this protein is Putative ankyrin repeat protein R810.